The following is a 145-amino-acid chain: D-aminoacyl-tRNA deacylase (145 aa).

Residues 137–138 (GP) carry the Gly-cisPro motif, important for rejection of L-amino acids motif.

Belongs to the DTD family. Homodimer.

The protein resides in the cytoplasm. The catalysed reaction is glycyl-tRNA(Ala) + H2O = tRNA(Ala) + glycine + H(+). The enzyme catalyses a D-aminoacyl-tRNA + H2O = a tRNA + a D-alpha-amino acid + H(+). An aminoacyl-tRNA editing enzyme that deacylates mischarged D-aminoacyl-tRNAs. Also deacylates mischarged glycyl-tRNA(Ala), protecting cells against glycine mischarging by AlaRS. Acts via tRNA-based rather than protein-based catalysis; rejects L-amino acids rather than detecting D-amino acids in the active site. By recycling D-aminoacyl-tRNA to D-amino acids and free tRNA molecules, this enzyme counteracts the toxicity associated with the formation of D-aminoacyl-tRNA entities in vivo and helps enforce protein L-homochirality. This Lactobacillus delbrueckii subsp. bulgaricus (strain ATCC BAA-365 / Lb-18) protein is D-aminoacyl-tRNA deacylase.